The following is a 429-amino-acid chain: Serine--tRNA ligase (429 aa).

L-serine is bound at residue 236–238; the sequence is TAE. An ATP-binding site is contributed by 267-269; that stretch reads RRE. An L-serine-binding site is contributed by Glu-290. 354 to 357 lines the ATP pocket; sequence EISS. Position 390 (Ser-390) interacts with L-serine.

This sequence belongs to the class-II aminoacyl-tRNA synthetase family. Type-1 seryl-tRNA synthetase subfamily. In terms of assembly, homodimer. The tRNA molecule binds across the dimer.

It is found in the cytoplasm. The enzyme catalyses tRNA(Ser) + L-serine + ATP = L-seryl-tRNA(Ser) + AMP + diphosphate + H(+). It catalyses the reaction tRNA(Sec) + L-serine + ATP = L-seryl-tRNA(Sec) + AMP + diphosphate + H(+). It functions in the pathway aminoacyl-tRNA biosynthesis; selenocysteinyl-tRNA(Sec) biosynthesis; L-seryl-tRNA(Sec) from L-serine and tRNA(Sec): step 1/1. Catalyzes the attachment of serine to tRNA(Ser). Is also able to aminoacylate tRNA(Sec) with serine, to form the misacylated tRNA L-seryl-tRNA(Sec), which will be further converted into selenocysteinyl-tRNA(Sec). In Gloeobacter violaceus (strain ATCC 29082 / PCC 7421), this protein is Serine--tRNA ligase.